The primary structure comprises 173 residues: Ribosome maturation factor RimM (173 aa).

Positions 90-169 (EDEYFWFDIL…RIDTKGAQDI (80 aa)) constitute a PRC barrel domain.

This sequence belongs to the RimM family. As to quaternary structure, binds ribosomal protein uS19.

The protein localises to the cytoplasm. An accessory protein needed during the final step in the assembly of 30S ribosomal subunit, possibly for assembly of the head region. Essential for efficient processing of 16S rRNA. May be needed both before and after RbfA during the maturation of 16S rRNA. It has affinity for free ribosomal 30S subunits but not for 70S ribosomes. The sequence is that of Ribosome maturation factor RimM from Nitratiruptor sp. (strain SB155-2).